The following is a 1062-amino-acid chain: Translation initiation factor IF-2 (1062 aa).

Positions 34 to 463 (SASSTVEAPV…RMGAMVPRGN (430 aa)) are disordered. A compositionally biased stretch (pro residues) spans 76 to 121 (PTPPSRPGLAPRPGPRPVPGRPGPLGRPGPATPAPSPSPASPPLPA). The span at 122–153 (SPVQASPVQASPVQASPTSAPAAPRPAAASAV) shows a compositional bias: low complexity. Pro residues predominate over residues 154–178 (PAPPMPSVPSAPSGPRPGPNAPRPG). Residues 198–214 (TAGGPTAGGPTAGGPTA) show a composition bias toward gly residues. Positions 294–305 (RPTPGGMPPRPG) are enriched in pro residues. Gly residues-rich tracts occupy residues 307–324 (PRSGAGGGMPPRPGGTGG) and 344–430 (PGGG…GGRG). Basic residues predominate over residues 431–442 (RPGRQRKSKRAK). Residues 555–727 (SRPPVVTVMG…IVLTADASLD (173 aa)) form the tr-type G domain. The segment at 564 to 571 (GHVDHGKT) is G1. 564–571 (GHVDHGKT) is a GTP binding site. Residues 589–593 (GITQH) form a G2 region. The interval 614–617 (DTPG) is G3. GTP-binding positions include 614 to 618 (DTPGH) and 668 to 671 (NKVD). Positions 668–671 (NKVD) are G4. Residues 704-706 (SAR) form a G5 region.

The protein belongs to the TRAFAC class translation factor GTPase superfamily. Classic translation factor GTPase family. IF-2 subfamily.

Its subcellular location is the cytoplasm. Functionally, one of the essential components for the initiation of protein synthesis. Protects formylmethionyl-tRNA from spontaneous hydrolysis and promotes its binding to the 30S ribosomal subunits. Also involved in the hydrolysis of GTP during the formation of the 70S ribosomal complex. This Frankia casuarinae (strain DSM 45818 / CECT 9043 / HFP020203 / CcI3) protein is Translation initiation factor IF-2.